Consider the following 290-residue polypeptide: 4-diphosphocytidyl-2-C-methyl-D-erythritol kinase (290 aa).

Lysine 8 is an active-site residue. Residue 89-99 coordinates ATP; it reads PIGAGVGGGSS. Aspartate 131 is an active-site residue.

Belongs to the GHMP kinase family. IspE subfamily.

It carries out the reaction 4-CDP-2-C-methyl-D-erythritol + ATP = 4-CDP-2-C-methyl-D-erythritol 2-phosphate + ADP + H(+). Its pathway is isoprenoid biosynthesis; isopentenyl diphosphate biosynthesis via DXP pathway; isopentenyl diphosphate from 1-deoxy-D-xylulose 5-phosphate: step 3/6. In terms of biological role, catalyzes the phosphorylation of the position 2 hydroxy group of 4-diphosphocytidyl-2C-methyl-D-erythritol. In Chlamydia felis (strain Fe/C-56) (Chlamydophila felis), this protein is 4-diphosphocytidyl-2-C-methyl-D-erythritol kinase.